The following is a 296-amino-acid chain: 4-hydroxybenzoate octaprenyltransferase (296 aa).

8 helical membrane passes run I28 to I48, L51 to I71, L102 to L122, F143 to F163, A174 to M194, F212 to A232, V233 to L253, and F274 to F294.

The protein belongs to the UbiA prenyltransferase family. The cofactor is Mg(2+).

The protein localises to the cell inner membrane. The catalysed reaction is all-trans-octaprenyl diphosphate + 4-hydroxybenzoate = 4-hydroxy-3-(all-trans-octaprenyl)benzoate + diphosphate. It functions in the pathway cofactor biosynthesis; ubiquinone biosynthesis. Catalyzes the prenylation of para-hydroxybenzoate (PHB) with an all-trans polyprenyl group. Mediates the second step in the final reaction sequence of ubiquinone-8 (UQ-8) biosynthesis, which is the condensation of the polyisoprenoid side chain with PHB, generating the first membrane-bound Q intermediate 3-octaprenyl-4-hydroxybenzoate. This chain is 4-hydroxybenzoate octaprenyltransferase, found in Neisseria meningitidis serogroup C (strain 053442).